Reading from the N-terminus, the 391-residue chain is Lipid-A-disaccharide synthase (391 aa).

It belongs to the LpxB family.

The enzyme catalyses a lipid X + a UDP-2-N,3-O-bis[(3R)-3-hydroxyacyl]-alpha-D-glucosamine = a lipid A disaccharide + UDP + H(+). Its pathway is bacterial outer membrane biogenesis; LPS lipid A biosynthesis. Functionally, condensation of UDP-2,3-diacylglucosamine and 2,3-diacylglucosamine-1-phosphate to form lipid A disaccharide, a precursor of lipid A, a phosphorylated glycolipid that anchors the lipopolysaccharide to the outer membrane of the cell. This Rickettsia akari (strain Hartford) protein is Lipid-A-disaccharide synthase.